The primary structure comprises 150 residues: Stage V sporulation protein AC (150 aa).

4 consecutive transmembrane segments (helical) span residues 30–50, 57–77, 84–104, and 121–141; these read LVGGLICAIGQGLQNFYIHFF, AGNPTAATLILISALLTGFGI, FAGAGSAVPVTGFANSMASAA, and FKLAGNVIVFGVVAAYIVGMI.

Its subcellular location is the cell membrane. The sequence is that of Stage V sporulation protein AC (spoVAC) from Bacillus subtilis (strain 168).